We begin with the raw amino-acid sequence, 88 residues long: Putative defensin-like protein 228 (88 aa).

The signal sequence occupies residues 1–27; that stretch reads MMKSAILLMVSCVFMFLVVSYIQDVEG. Cystine bridges form between cysteine 32-cysteine 88, cysteine 42-cysteine 66, cysteine 50-cysteine 82, and cysteine 64-cysteine 84.

The protein belongs to the DEFL family.

Its subcellular location is the secreted. The protein is Putative defensin-like protein 228 (SCRL3) of Arabidopsis thaliana (Mouse-ear cress).